The chain runs to 268 residues: Basic endochitinase CHB4 (268 aa).

Residues 1 to 24 (MALTKLSLVLFLCFLGLYSETVKS) form the signal peptide. Residues 25-59 (QNCGCAPNLCCSQFGYCGSTDAYCGTGCRSGPCRS) enclose the Chitin-binding type-1 domain. Cystine bridges form between Cys-27–Cys-35, Cys-29–Cys-41, Cys-34–Cys-48, Cys-52–Cys-57, Cys-92–Cys-137, Cys-150–Cys-159, and Cys-236–Cys-268. The interval 71 to 268 (SVGSIVTQAF…GVDPGPNLSC (198 aa)) is catalytic. The active-site Proton donor is the Glu-132. Asn-265 carries N-linked (GlcNAc...) asparagine glycosylation.

It belongs to the glycosyl hydrolase 19 family. Chitinase class I subfamily.

It localises to the secreted. The protein localises to the extracellular space. The catalysed reaction is Random endo-hydrolysis of N-acetyl-beta-D-glucosaminide (1-&gt;4)-beta-linkages in chitin and chitodextrins.. In terms of biological role, defense against chitin-containing fungal pathogens. The protein is Basic endochitinase CHB4 of Brassica napus (Rape).